The sequence spans 118 residues: V-type proton ATPase subunit G 3 (118 aa).

Residues 1–12 (MTSQSQGIQQLL) show a composition bias toward polar residues. The segment at 1–44 (MTSQSQGIQQLLQAEKRAKDKLDEAKKRKGKRLRQAKEEAVAET) is disordered. A coiled-coil region spans residues 5 to 53 (SQGIQQLLQAEKRAKDKLDEAKKRKGKRLRQAKEEAVAETDQYRMQMEK). Residues 14-26 (AEKRAKDKLDEAK) show a composition bias toward basic and acidic residues.

Belongs to the V-ATPase G subunit family. V-ATPase is a heteromultimeric enzyme made up of two complexes: the ATP-hydrolytic V1 complex and the proton translocation V0 complex. The V1 complex consists of three catalytic AB heterodimers that form a heterohexamer, three peripheral stalks each consisting of EG heterodimers, one central rotor including subunits D and F, and the regulatory subunits C and H. The proton translocation complex V0 consists of the proton transport subunit a, a ring of proteolipid subunits c9c'', rotary subunit d, subunits e and f, and the accessory subunits ATP6AP1/Ac45 and ATP6AP2/PRR. As to expression, kidney.

Subunit of the V1 complex of vacuolar(H+)-ATPase (V-ATPase), a multisubunit enzyme composed of a peripheral complex (V1) that hydrolyzes ATP and a membrane integral complex (V0) that translocates protons. V-ATPase is responsible for acidifying and maintaining the pH of intracellular compartments and in some cell types, is targeted to the plasma membrane, where it is responsible for acidifying the extracellular environment. The sequence is that of V-type proton ATPase subunit G 3 (Atp6v1g3) from Mus musculus (Mouse).